Here is a 435-residue protein sequence, read N- to C-terminus: E3 ubiquitin-protein ligase RNFT1 (435 aa).

The segment at 1–62 (MPLFLLSLPT…SSEDASTPQC (62 aa)) is disordered. Basic and acidic residues predominate over residues 16–34 (GHERRQRPEAKTSGSEKKY). The span at 40-62 (ANRSQLHSPPGTGSSEDASTPQC) shows a compositional bias: polar residues. Transmembrane regions (helical) follow at residues 158–178 (ILILSVKLVMQHITGISLGIG), 203–223 (IQCAWLLVFLAGSSVLLYYTF), 233–253 (IFLNPTLDHLSFWEVFWIVGI), 256–276 (FILKFFFMGLKCLILLVPSFI), 298–318 (TFVPIPVWFRYLISYGEFGNV), and 323–343 (LGILLALLYLILKLLEFFGHL). The segment at 368–419 (CSDVDDICSICQAEFQKPILLICQHIFCEECMTLWFNREKTCPLCRTVISDH) is required for ubiquitin ligase activity and for protection against ER stress-induced cell death. Residues 375-413 (CSICQAEFQKPILLICQHIFCEECMTLWFNREKTCPLCR) form an RING-type zinc finger.

Expressed at highest levels in testis, lower levels in heart, liver, lung, and kidney. Not detected in brain, ovary, and uterus. Down-regulated in testis from patients with maturation arrest (MA) or Sertoli cell-only syndrome (SCOS). Ubiquitously expressed with high expression in testis.

It localises to the endoplasmic reticulum membrane. It carries out the reaction S-ubiquitinyl-[E2 ubiquitin-conjugating enzyme]-L-cysteine + [acceptor protein]-L-lysine = [E2 ubiquitin-conjugating enzyme]-L-cysteine + N(6)-ubiquitinyl-[acceptor protein]-L-lysine.. It functions in the pathway protein modification; protein ubiquitination. Its function is as follows. E3 ubiquitin-protein ligase that acts in the endoplasmic reticulum (ER)-associated degradation (ERAD) pathway, which targets misfolded proteins that accumulate in the endoplasmic reticulum (ER) for ubiquitination and subsequent proteasome-mediated degradation. Protects cells from ER stress-induced apoptosis. The protein is E3 ubiquitin-protein ligase RNFT1 (RNFT1) of Homo sapiens (Human).